Here is a 253-residue protein sequence, read N- to C-terminus: Hydroxyacylglutathione hydrolase (253 aa).

His-59, His-61, Asp-63, His-64, His-118, Asp-143, and His-181 together coordinate Zn(2+).

Belongs to the metallo-beta-lactamase superfamily. Glyoxalase II family. As to quaternary structure, monomer. Zn(2+) is required as a cofactor.

The enzyme catalyses an S-(2-hydroxyacyl)glutathione + H2O = a 2-hydroxy carboxylate + glutathione + H(+). It functions in the pathway secondary metabolite metabolism; methylglyoxal degradation; (R)-lactate from methylglyoxal: step 2/2. In terms of biological role, thiolesterase that catalyzes the hydrolysis of S-D-lactoyl-glutathione to form glutathione and D-lactic acid. This Prochlorococcus marinus (strain SARG / CCMP1375 / SS120) protein is Hydroxyacylglutathione hydrolase.